The sequence spans 104 residues: Nucleoid-associated protein Amuc_1227 (104 aa).

It belongs to the YbaB/EbfC family. Homodimer.

It is found in the cytoplasm. The protein localises to the nucleoid. In terms of biological role, binds to DNA and alters its conformation. May be involved in regulation of gene expression, nucleoid organization and DNA protection. This is Nucleoid-associated protein Amuc_1227 from Akkermansia muciniphila (strain ATCC BAA-835 / DSM 22959 / JCM 33894 / BCRC 81048 / CCUG 64013 / CIP 107961 / Muc).